The primary structure comprises 98 residues: Cell division topological specificity factor (98 aa).

This sequence belongs to the MinE family.

Its function is as follows. Prevents the cell division inhibition by proteins MinC and MinD at internal division sites while permitting inhibition at polar sites. This ensures cell division at the proper site by restricting the formation of a division septum at the midpoint of the long axis of the cell. The protein is Cell division topological specificity factor of Moorella thermoacetica (strain ATCC 39073 / JCM 9320).